Reading from the N-terminus, the 398-residue chain is 4-hydroxy-3-methylbut-2-enyl diphosphate reductase (398 aa).

Cysteine 66 provides a ligand contact to [4Fe-4S] cluster. Residue histidine 96 coordinates (2E)-4-hydroxy-3-methylbut-2-enyl diphosphate. Histidine 96 lines the dimethylallyl diphosphate pocket. Histidine 96 provides a ligand contact to isopentenyl diphosphate. Residue cysteine 157 participates in [4Fe-4S] cluster binding. Histidine 185 provides a ligand contact to (2E)-4-hydroxy-3-methylbut-2-enyl diphosphate. Position 185 (histidine 185) interacts with dimethylallyl diphosphate. Residue histidine 185 coordinates isopentenyl diphosphate. Residue glutamate 187 is the Proton donor of the active site. Threonine 250 is a binding site for (2E)-4-hydroxy-3-methylbut-2-enyl diphosphate. Residue cysteine 288 participates in [4Fe-4S] cluster binding. (2E)-4-hydroxy-3-methylbut-2-enyl diphosphate is bound by residues serine 317, serine 318, asparagine 319, and serine 380. Residues serine 317, serine 318, asparagine 319, and serine 380 each contribute to the dimethylallyl diphosphate site. Residues serine 317, serine 318, asparagine 319, and serine 380 each coordinate isopentenyl diphosphate.

It belongs to the IspH family. [4Fe-4S] cluster serves as cofactor.

The catalysed reaction is isopentenyl diphosphate + 2 oxidized [2Fe-2S]-[ferredoxin] + H2O = (2E)-4-hydroxy-3-methylbut-2-enyl diphosphate + 2 reduced [2Fe-2S]-[ferredoxin] + 2 H(+). It carries out the reaction dimethylallyl diphosphate + 2 oxidized [2Fe-2S]-[ferredoxin] + H2O = (2E)-4-hydroxy-3-methylbut-2-enyl diphosphate + 2 reduced [2Fe-2S]-[ferredoxin] + 2 H(+). It functions in the pathway isoprenoid biosynthesis; dimethylallyl diphosphate biosynthesis; dimethylallyl diphosphate from (2E)-4-hydroxy-3-methylbutenyl diphosphate: step 1/1. It participates in isoprenoid biosynthesis; isopentenyl diphosphate biosynthesis via DXP pathway; isopentenyl diphosphate from 1-deoxy-D-xylulose 5-phosphate: step 6/6. Catalyzes the conversion of 1-hydroxy-2-methyl-2-(E)-butenyl 4-diphosphate (HMBPP) into a mixture of isopentenyl diphosphate (IPP) and dimethylallyl diphosphate (DMAPP). Acts in the terminal step of the DOXP/MEP pathway for isoprenoid precursor biosynthesis. This chain is 4-hydroxy-3-methylbut-2-enyl diphosphate reductase, found in Prochlorococcus marinus subsp. pastoris (strain CCMP1986 / NIES-2087 / MED4).